A 567-amino-acid chain; its full sequence is Urease subunit alpha (567 aa).

Positions 129–567 (GGIDAHIHFI…LPLAQLYCLF (439 aa)) constitute a Urease domain. The Ni(2+) site is built by His-134, His-136, and Lys-217. At Lys-217 the chain carries N6-carboxylysine. Residue His-219 coordinates substrate. The Ni(2+) site is built by His-246 and His-272. The active-site Proton donor is His-320. Asp-360 contacts Ni(2+).

This sequence belongs to the metallo-dependent hydrolases superfamily. Urease alpha subunit family. Heterotrimer of UreA (gamma), UreB (beta) and UreC (alpha) subunits. Three heterotrimers associate to form the active enzyme. Ni cation serves as cofactor. In terms of processing, carboxylation allows a single lysine to coordinate two nickel ions.

It localises to the cytoplasm. It carries out the reaction urea + 2 H2O + H(+) = hydrogencarbonate + 2 NH4(+). Its pathway is nitrogen metabolism; urea degradation; CO(2) and NH(3) from urea (urease route): step 1/1. In Alteromonas mediterranea (strain DSM 17117 / CIP 110805 / LMG 28347 / Deep ecotype), this protein is Urease subunit alpha.